The sequence spans 299 residues: Meso-diaminopimelate D-dehydrogenase (299 aa).

NADP(+) contacts are provided by residues 11-14 (YGNI), arginine 36, 67-70 (CTPT), 90-92 (SFD), and 119-123 (AGWDP). Residues aspartate 92, aspartate 122, phenylalanine 146, 152–153 (MG), threonine 171, arginine 181, histidine 227, and asparagine 253 contribute to the substrate site.

Belongs to the diaminopimelate dehydrogenase family. As to quaternary structure, homodimer.

The enzyme catalyses meso-2,6-diaminopimelate + NADP(+) + H2O = (S)-2-amino-6-oxoheptanedioate + NH4(+) + NADPH + H(+). The protein operates within amino-acid biosynthesis; L-lysine biosynthesis via DAP pathway; DL-2,6-diaminopimelate from (S)-tetrahydrodipicolinate: step 1/1. In terms of biological role, catalyzes the reversible NADPH-dependent reductive amination of L-2-amino-6-oxopimelate, the acyclic form of L-tetrahydrodipicolinate, to generate the meso compound, D,L-2,6-diaminopimelate. Probably plays a role in lysine biosynthesis. Exhibits a high substrate specificity for meso-2,6-diaminopimelate (m-DAP), since the activity with L,L-2,6-diaminopimelate is less than 5% of the activity observed with m-DAP. Can use NAD(+) only very poorly since the activity observed in the presence of NAD(+) is about 14% of that with NADP(+). This chain is Meso-diaminopimelate D-dehydrogenase (ddh), found in Bacteroides fragilis (strain ATCC 25285 / DSM 2151 / CCUG 4856 / JCM 11019 / LMG 10263 / NCTC 9343 / Onslow / VPI 2553 / EN-2).